The chain runs to 104 residues: L-rhamnose mutarotase (104 aa).

Position 18 (Y18) interacts with substrate. Catalysis depends on H22, which acts as the Proton donor. Substrate-binding positions include Y41 and 76 to 77 (WW).

This sequence belongs to the rhamnose mutarotase family. Homodimer.

The protein resides in the cytoplasm. It carries out the reaction alpha-L-rhamnose = beta-L-rhamnose. It functions in the pathway carbohydrate metabolism; L-rhamnose metabolism. In terms of biological role, involved in the anomeric conversion of L-rhamnose. This chain is L-rhamnose mutarotase, found in Sinorhizobium medicae (strain WSM419) (Ensifer medicae).